Consider the following 164-residue polypeptide: Envelope glycoprotein L (164 aa).

The signal sequence occupies residues 1–24; that stretch reads MRSLDRYAIFILLACGLLWRPCLS.

This sequence belongs to the herpesviridae glycoprotein L family. In terms of assembly, interacts with glycoprotein H (gH); this interaction is necessary for the correct processing and cell surface expression of gH. The heterodimer gH/gL seems to interact with gB trimers during fusion.

It is found in the virion membrane. Its subcellular location is the host cell membrane. The protein resides in the host Golgi apparatus. The protein localises to the host trans-Golgi network. The heterodimer glycoprotein H-glycoprotein L is required for the fusion of viral and plasma membranes leading to virus entry into the host cell. Acts as a functional inhibitor of gH and maintains gH in an inhibited form. Upon binding to host integrins, gL dissociates from gH leading to activation of the viral fusion glycoproteins gB and gH. This Equine herpesvirus 2 (strain 86/87) (EHV-2) protein is Envelope glycoprotein L.